The sequence spans 948 residues: 3-hydroxy-3-methylglutaryl-coenzyme A reductase (948 aa).

Transmembrane regions (helical) follow at residues leucine 9–isoleucine 25, valine 55–cysteine 71, leucine 96–valine 112, threonine 124–leucine 140, isoleucine 207–isoleucine 223, and cysteine 286–leucine 302. Asparagine 316 is a glycosylation site (N-linked (GlcNAc...) asparagine). The chain crosses the membrane as a helical span at residues valine 347–phenylalanine 363. A linker region spans residues lysine 364–leucine 466. Asparagine 430 carries an N-linked (GlcNAc...) asparagine glycan. Residues glycine 467–methionine 948 form a catalytic region. Residues glutamate 567, lysine 699, and aspartate 777 each act as charge relay system in the active site. Catalysis depends on histidine 869, which acts as the Proton donor. A glycan (N-linked (GlcNAc...) asparagine) is linked at asparagine 895.

It belongs to the HMG-CoA reductase family.

It is found in the endoplasmic reticulum membrane. The protein resides in the peroxisome membrane. The enzyme catalyses (R)-mevalonate + 2 NADP(+) + CoA = (3S)-3-hydroxy-3-methylglutaryl-CoA + 2 NADPH + 2 H(+). The protein operates within metabolic intermediate biosynthesis; (R)-mevalonate biosynthesis; (R)-mevalonate from acetyl-CoA: step 3/3. Functionally, this transmembrane glycoprotein is involved in the control of cholesterol and nonsterol isoprenoid compounds biosynthesis. It is the rate-limiting enzyme of sterol biosynthesis. In Schistosoma mansoni (Blood fluke), this protein is 3-hydroxy-3-methylglutaryl-coenzyme A reductase.